We begin with the raw amino-acid sequence, 133 residues long: Small ribosomal subunit protein uS12c (133 aa).

The protein belongs to the universal ribosomal protein uS12 family. As to quaternary structure, part of the 30S ribosomal subunit.

It localises to the plastid. The protein localises to the chloroplast. With S4 and S5 plays an important role in translational accuracy. Located at the interface of the 30S and 50S subunits. This Chlamydomonas reinhardtii (Chlamydomonas smithii) protein is Small ribosomal subunit protein uS12c (rps12).